A 343-amino-acid polypeptide reads, in one-letter code: MTISVAVSGASGYAGGEVLRILAGHPDVTIGAITAHSNAGSRLGELQPHLHGLASRILEDTTVENLSGHDVVFLALPHGASAEIAAQLPEGTVVIDAGADHRLEDPAAWEKFYGSAHAGTWPYGLPELPGQREALKGATRIAVPGCYPTSALLALTPGFAANLLEPDDVVIVSASGTSGAGKAAKVNLIGAEVMGSMSPYGVGGGHRHTPEIEQGLSNAAGERVTVSFTPTLAPMSRGILTTATAKVKAGTTAEQLRQAWADAYDDEPFVHLLPEGQWPGTKSVQGSNHAAMQLAFDPHTGRVVVTCVIDNLTKGTAGGAVQSMNIALGLPETAGLNLQGVAP.

Residue Cys-146 is part of the active site.

Belongs to the NAGSA dehydrogenase family. Type 1 subfamily.

The protein resides in the cytoplasm. The enzyme catalyses N-acetyl-L-glutamate 5-semialdehyde + phosphate + NADP(+) = N-acetyl-L-glutamyl 5-phosphate + NADPH + H(+). The protein operates within amino-acid biosynthesis; L-arginine biosynthesis; N(2)-acetyl-L-ornithine from L-glutamate: step 3/4. Catalyzes the NADPH-dependent reduction of N-acetyl-5-glutamyl phosphate to yield N-acetyl-L-glutamate 5-semialdehyde. The polypeptide is N-acetyl-gamma-glutamyl-phosphate reductase (Pseudarthrobacter chlorophenolicus (strain ATCC 700700 / DSM 12829 / CIP 107037 / JCM 12360 / KCTC 9906 / NCIMB 13794 / A6) (Arthrobacter chlorophenolicus)).